A 527-amino-acid polypeptide reads, in one-letter code: QDQVIKFTTEGATSQSYKQFIEALRQRLTGGLIHGIPVLPDPTTLQERNRYISVELSNSDTESIEAGIDVSNAYVVAYRAGNRSYFLRDAPTSASRYLFTGTQQYSLRFNGSYIDLERLARQTRQQIPLGLQALRHAISFLQSGTDDQEIARTLIVIIQMASEAARYRFISYRVGVSIRTNTAFQPDAAMISLENNWDNLSGGVQQSVQDTFPNAVTLRSVNNQPVIVDSLTHQSVAVLALMLFVCNPPNANQSPLLIRSIVEKSKICSSRYEPTVRIGGRNGMCVDVYDDGYHNGNRIIAWKCKDRLEENQLWTLKSDKTIRSNGKCLTTEGYAPGNYVMIYDCTSAVAEATYWEIWDNGTIINPKSALVLSAESSSMGGTLTVQTNEYLMRQGWRTGNNTSPFVTSISGYSDLCMQAQGSNVWLAYCDNNKKEQQWALYTDGSIRSVQNTNNCLTSKDHKQGSPIVLMACSNGWASQRWLFRNDGSIYNLHDDMVMDVKRSDPSLKEIILHPYHGKPNQIWLTLF.

Q1 carries the post-translational modification Pyrrolidone carboxylic acid. Residue N110 is glycosylated (N-linked (GlcNAc...) asparagine). Residue E163 is part of the active site. 3 cysteine pairs are disulfide-bonded: C246–C268, C285–C304, and C328–C345. Residues 272–399 (YEPTVRIGGR…YLMRQGWRTG (128 aa)) enclose the Ricin B-type lectin 1 domain. Residues 282 to 324 (NGMCVDVYDDGYHNGNRIIAWKCKDRLEENQLWTLKSDKTIRS) form a 1-alpha repeat. A 1-beta repeat occupies 325-365 (NGKCLTTEGYAPGNYVMIYDCTSAVAEATYWEIWDNGTIIN). N-linked (GlcNAc...) asparagine glycans are attached at residues N360 and N400. The stretch at 368–400 (SALVLSAESSSMGGTLTVQTNEYLMRQGWRTGN) is one 1-gamma repeat. Positions 402 to 526 (TSPFVTSISG…GKPNQIWLTL (125 aa)) constitute a Ricin B-type lectin 2 domain. One copy of the 2-alpha repeat lies at 413-448 (SDLCMQAQGSNVWLAYCDNNKKEQQWALYTDGSIRS). 2 cysteine pairs are disulfide-bonded: C416–C429 and C455–C472. A 2-beta repeat occupies 452 to 491 (TNNCLTSKDHKQGSPIVLMACSNGWASQRWLFRNDGSIYN). A 2-gamma repeat occupies 494–527 (DDMVMDVKRSDPSLKEIILHPYHGKPNQIWLTLF).

In the N-terminal section; belongs to the ribosome-inactivating protein family. Type 2 RIP subfamily. In terms of assembly, disulfide-linked dimer of A and B chains.

The catalysed reaction is Endohydrolysis of the N-glycosidic bond at one specific adenosine on the 28S rRNA.. In terms of biological role, the A chain is responsible for inhibiting protein synthesis through the catalytic inactivation of 60S ribosomal subunits by removing adenine from position 4,324 of 28S rRNA. Abrin-a is more toxic than ricin. Its function is as follows. The B chain is a galactose-specific lectin that facilitates the binding of abrin to the cell membrane that precedes endocytosis. The sequence is that of Abrin-b from Abrus precatorius (Indian licorice).